The sequence spans 189 residues: Protein GrpE (189 aa).

Residues 1–31 form a disordered region; the sequence is MSKKHMKGNGGEVPENSEMSGSEELVAVEPG.

Belongs to the GrpE family. Homodimer.

It localises to the cytoplasm. Participates actively in the response to hyperosmotic and heat shock by preventing the aggregation of stress-denatured proteins, in association with DnaK and GrpE. It is the nucleotide exchange factor for DnaK and may function as a thermosensor. Unfolded proteins bind initially to DnaJ; upon interaction with the DnaJ-bound protein, DnaK hydrolyzes its bound ATP, resulting in the formation of a stable complex. GrpE releases ADP from DnaK; ATP binding to DnaK triggers the release of the substrate protein, thus completing the reaction cycle. Several rounds of ATP-dependent interactions between DnaJ, DnaK and GrpE are required for fully efficient folding. This chain is Protein GrpE, found in Syntrophobacter fumaroxidans (strain DSM 10017 / MPOB).